We begin with the raw amino-acid sequence, 573 residues long: Isocitrate dehydrogenase kinase/phosphatase (573 aa).

Residues 317 to 323 and lysine 338 contribute to the ATP site; that span reads APGVRGM. Residue aspartate 373 is part of the active site.

This sequence belongs to the AceK family.

Its subcellular location is the cytoplasm. The catalysed reaction is L-seryl-[isocitrate dehydrogenase] + ATP = O-phospho-L-seryl-[isocitrate dehydrogenase] + ADP + H(+). Functionally, bifunctional enzyme which can phosphorylate or dephosphorylate isocitrate dehydrogenase (IDH) on a specific serine residue. This is a regulatory mechanism which enables bacteria to bypass the Krebs cycle via the glyoxylate shunt in response to the source of carbon. When bacteria are grown on glucose, IDH is fully active and unphosphorylated, but when grown on acetate or ethanol, the activity of IDH declines drastically concomitant with its phosphorylation. This is Isocitrate dehydrogenase kinase/phosphatase from Pseudomonas fluorescens (strain ATCC BAA-477 / NRRL B-23932 / Pf-5).